A 142-amino-acid polypeptide reads, in one-letter code: Deoxyuridine 5'-triphosphate nucleotidohydrolase (142 aa).

Substrate contacts are provided by residues 62 to 64, asparagine 75, and 79 to 81; these read RSG and TID.

It belongs to the dUTPase family. Requires Mg(2+) as cofactor.

The enzyme catalyses dUTP + H2O = dUMP + diphosphate + H(+). It participates in pyrimidine metabolism; dUMP biosynthesis; dUMP from dCTP (dUTP route): step 2/2. Its function is as follows. This enzyme is involved in nucleotide metabolism: it produces dUMP, the immediate precursor of thymidine nucleotides and it decreases the intracellular concentration of dUTP so that uracil cannot be incorporated into DNA. The sequence is that of Deoxyuridine 5'-triphosphate nucleotidohydrolase from Trichodesmium erythraeum (strain IMS101).